The sequence spans 298 residues: Ribosomal RNA small subunit methyltransferase H (298 aa).

S-adenosyl-L-methionine is bound by residues 37-39 (GGH), Asp-57, Leu-91, Asp-105, and Gln-112.

This sequence belongs to the methyltransferase superfamily. RsmH family.

It is found in the cytoplasm. The enzyme catalyses cytidine(1402) in 16S rRNA + S-adenosyl-L-methionine = N(4)-methylcytidine(1402) in 16S rRNA + S-adenosyl-L-homocysteine + H(+). In terms of biological role, specifically methylates the N4 position of cytidine in position 1402 (C1402) of 16S rRNA. This is Ribosomal RNA small subunit methyltransferase H from Kosmotoga olearia (strain ATCC BAA-1733 / DSM 21960 / TBF 19.5.1).